Reading from the N-terminus, the 629-residue chain is Phosphomethylpyrimidine synthase (629 aa).

The span at 1–13 shows a compositional bias: polar residues; sequence MTTKSKNAINLSD. Residues 1-22 are disordered; it reads MTTKSKNAINLSDSAKVDEQSV. Residues Asn-233, Met-262, Tyr-291, His-327, 347-349, 388-391, and Glu-427 contribute to the substrate site; these read SRG and DGLR. His-431 contributes to the Zn(2+) binding site. Tyr-454 contacts substrate. His-495 contributes to the Zn(2+) binding site. [4Fe-4S] cluster contacts are provided by Cys-575, Cys-578, and Cys-583.

This sequence belongs to the ThiC family. Homodimer. [4Fe-4S] cluster is required as a cofactor.

The enzyme catalyses 5-amino-1-(5-phospho-beta-D-ribosyl)imidazole + S-adenosyl-L-methionine = 4-amino-2-methyl-5-(phosphooxymethyl)pyrimidine + CO + 5'-deoxyadenosine + formate + L-methionine + 3 H(+). It functions in the pathway cofactor biosynthesis; thiamine diphosphate biosynthesis. Functionally, catalyzes the synthesis of the hydroxymethylpyrimidine phosphate (HMP-P) moiety of thiamine from aminoimidazole ribotide (AIR) in a radical S-adenosyl-L-methionine (SAM)-dependent reaction. This Pseudomonas fluorescens (strain Pf0-1) protein is Phosphomethylpyrimidine synthase.